Reading from the N-terminus, the 141-residue chain is Protein stum homolog (141 aa).

S26 carries the phosphoserine modification. Helical transmembrane passes span 51–71 and 87–107; these read FPVAVICLFLNTFVPGLGTFV and RHVCCVFWLNIAAALIQVLTA.

Belongs to the SPEC3 family. Stum subfamily.

Its subcellular location is the membrane. In Mus musculus (Mouse), this protein is Protein stum homolog.